Here is a 546-residue protein sequence, read N- to C-terminus: Chaperonin GroEL (546 aa).

ATP is bound by residues 30–33 (TLGP), lysine 51, 87–91 (DGTTT), glycine 415, and aspartate 495.

It belongs to the chaperonin (HSP60) family. In terms of assembly, forms a cylinder of 14 subunits composed of two heptameric rings stacked back-to-back. Interacts with the co-chaperonin GroES.

The protein localises to the cytoplasm. It catalyses the reaction ATP + H2O + a folded polypeptide = ADP + phosphate + an unfolded polypeptide.. Functionally, together with its co-chaperonin GroES, plays an essential role in assisting protein folding. The GroEL-GroES system forms a nano-cage that allows encapsulation of the non-native substrate proteins and provides a physical environment optimized to promote and accelerate protein folding. This is Chaperonin GroEL from Brucella melitensis biotype 2 (strain ATCC 23457).